The primary structure comprises 186 residues: Biofilm operon icaADBC HTH-type negative transcriptional regulator IcaR (186 aa).

In terms of domain architecture, HTH tetR-type spans 1-59 (MKDKIIDNAITLFSEKGYDGTTLDDIAKSVNIKKASLYYHFDSKKSIYEQSVKCCFDYL). The segment at residues 22 to 41 (TLDDIAKSVNIKKASLYYHF) is a DNA-binding region (H-T-H motif).

Homodimer.

Represses transcription of the icaADBC operon necessary for biofilm production. This chain is Biofilm operon icaADBC HTH-type negative transcriptional regulator IcaR (icaR), found in Staphylococcus aureus (strain NCTC 8325 / PS 47).